The following is a 111-amino-acid chain: MAEQKTGQKADQKIRIRLKAFDHRLIDRSASEIVETAKRTGAQVRGPIPLPTKIERYTILVSPHADKDARDQYETRTHKRVLDIIDPNDKTVDALMKLELAAGVDVQIKLT.

It belongs to the universal ribosomal protein uS10 family. Part of the 30S ribosomal subunit.

Its function is as follows. Involved in the binding of tRNA to the ribosomes. The polypeptide is Small ribosomal subunit protein uS10 (Xanthomonas euvesicatoria pv. vesicatoria (strain 85-10) (Xanthomonas campestris pv. vesicatoria)).